The sequence spans 101 residues: Small ribosomal subunit protein uS14 (101 aa).

The protein belongs to the universal ribosomal protein uS14 family. In terms of assembly, part of the 30S ribosomal subunit. Contacts proteins S3 and S10.

Binds 16S rRNA, required for the assembly of 30S particles and may also be responsible for determining the conformation of the 16S rRNA at the A site. This Cronobacter sakazakii (strain ATCC BAA-894) (Enterobacter sakazakii) protein is Small ribosomal subunit protein uS14.